The chain runs to 82 residues: Exodeoxyribonuclease 7 small subunit (82 aa).

It belongs to the XseB family. As to quaternary structure, heterooligomer composed of large and small subunits.

It localises to the cytoplasm. The enzyme catalyses Exonucleolytic cleavage in either 5'- to 3'- or 3'- to 5'-direction to yield nucleoside 5'-phosphates.. Bidirectionally degrades single-stranded DNA into large acid-insoluble oligonucleotides, which are then degraded further into small acid-soluble oligonucleotides. This chain is Exodeoxyribonuclease 7 small subunit, found in Mannheimia succiniciproducens (strain KCTC 0769BP / MBEL55E).